We begin with the raw amino-acid sequence, 242 residues long: Protein MHF1 homolog (242 aa).

A disordered region spans residues 208–242 (LKAKEPQSERKRKKGSAKKEDKASSSNAVRITTDL). The segment covering 231 to 242 (SSSNAVRITTDL) has biased composition (polar residues).

Belongs to the TAF9 family. CENP-S/MHF1 subfamily.

The protein resides in the nucleus. Involved in the promotion of spontaneous somatic homologous recombination (HR) events, which is opposite to the function of FANCM in ordered HR. Only FANCM is essential for replicative repair in the absence of the endonuclease MUS81. Acts in the same pathway as FANCM to restrain class II meiotic crossing over (CO), and acts with FANCM during meiosis to repair interstrand cross-links (ICLs). This common pathway between MHF1 and FANCM is in parallel to the pathway that involves the RECQ4A helicase. This is Protein MHF1 homolog from Arabidopsis thaliana (Mouse-ear cress).